The following is a 132-amino-acid chain: U11/U12 small nuclear ribonucleoprotein 25 kDa protein (132 aa).

The Ubiquitin-like domain occupies 41 to 132 (MTVRVCKMDG…VSFIKKLRQK (92 aa)).

As to quaternary structure, component of the U11/U12 snRNPs that are part of the U12-type spliceosome.

The protein localises to the nucleus. This chain is U11/U12 small nuclear ribonucleoprotein 25 kDa protein (SNRNP25), found in Homo sapiens (Human).